Here is a 237-residue protein sequence, read N- to C-terminus: Protein GrpE (237 aa).

Disordered stretches follow at residues 1-52 (MSGD…RLQQ) and 200-237 (KVSM…QPGV). Residues 27 to 40 (ASINSDEGQSSAQS) show a composition bias toward polar residues. A compositionally biased stretch (low complexity) spans 204–218 (GPGPQSGASPSSAQP).

The protein belongs to the GrpE family. As to quaternary structure, homodimer.

The protein resides in the cytoplasm. In terms of biological role, participates actively in the response to hyperosmotic and heat shock by preventing the aggregation of stress-denatured proteins, in association with DnaK and GrpE. It is the nucleotide exchange factor for DnaK and may function as a thermosensor. Unfolded proteins bind initially to DnaJ; upon interaction with the DnaJ-bound protein, DnaK hydrolyzes its bound ATP, resulting in the formation of a stable complex. GrpE releases ADP from DnaK; ATP binding to DnaK triggers the release of the substrate protein, thus completing the reaction cycle. Several rounds of ATP-dependent interactions between DnaJ, DnaK and GrpE are required for fully efficient folding. The protein is Protein GrpE of Prochlorococcus marinus (strain MIT 9313).